The following is a 306-amino-acid chain: MTNKPAKRPVNGVLLLDKPEGLSSNTALQKARRLFHAEKAGHTGVLDPLATGLLPVCFGEAAKFAQYLLDADKAYTATLKLGEASSTGDAEGEIIAAARADISLAEFQTACQALTGNIRQVPPMFSALKHEGKPLYEYARKGIVIERKPRDITVYSIDIAEFDAPKAVISVRCSKGTYIRTLSEGIAKHIGTFAHLTALRRTETAGFTIAQSHTLEALANLDETERDNLLLPCDVLVSHFPQTVLNDYAVHMLQCGQRPRFEEDLPSDTPVRVYTENGRFVGLAEYQKEICRMKALRLMNTAASSA.

The Nucleophile role is filled by Asp-47.

This sequence belongs to the pseudouridine synthase TruB family. Type 1 subfamily.

The enzyme catalyses uridine(55) in tRNA = pseudouridine(55) in tRNA. Its function is as follows. Responsible for synthesis of pseudouridine from uracil-55 in the psi GC loop of transfer RNAs. The polypeptide is tRNA pseudouridine synthase B (Neisseria gonorrhoeae (strain NCCP11945)).